Consider the following 206-residue polypeptide: Sortase A (206 aa).

Topologically, residues 1-6 (MKKWTN) are cytoplasmic. Residues 7-24 (RLMTIAGVVLILVAAYLF) form a helical membrane-spanning segment. Topologically, residues 25–206 (AKPHIDNYLH…RKIFVATEVK (182 aa)) are extracellular. Positions 49–69 (VKEQASKDKKQQAKPQIPKDK) are disordered. 4 residues coordinate Ca(2+): glutamate 105, glutamate 108, aspartate 112, and asparagine 114. Catalysis depends on histidine 120, which acts as the Proton donor/acceptor. Glutamate 171 contributes to the Ca(2+) binding site. Cysteine 184 serves as the catalytic Acyl-thioester intermediate.

It belongs to the bacterial sortase family. Class A subfamily. As to quaternary structure, monomer and homodimer; in equilibrium.

The protein localises to the cell membrane. It carries out the reaction The enzyme catalyzes a cell wall sorting reaction in which a surface protein with a sorting signal containing a LPXTG motif is cleaved between the Thr and Gly residue. The resulting threonine carboxyl end of the protein is covalently attached to a pentaglycine cross-bridge of peptidoglycan.. Sortase activity is regulated by monomer-homodimer equilibrium. Mutant cells with monomeric SrtA display more adhesive proteins on the cell surface and are more invasive than wild-type cells, which have majority of SrtA in dimeric form. Dimerization may suppress the enzymatic activity on cell membranes. Stimulated by calcium ions, which promote substrate binding. Calcium ions bind to SrtA and modulate both the structure and dynamics of a large active site loop. Can also be stimulated, to a lesser extent, by Mg(2+) and Mn(2+). Inhibited by sulfhydryl-modifying reagents. Functionally, transpeptidase that anchors surface proteins to the cell wall. Recognizes and modifies its substrate by proteolytic cleavage of a C-terminal sorting signal. Following cleavage, a covalent intermediate is formed via a thioester bond between the sortase and its substrate, which is then transferred and covalently attached to the cell wall. This sortase recognizes a Leu-Pro-x-Thr-Gly (LPXTG) motif, which is cleaved by the sortase between the threonine and glycine residues. Utilizes lipid II as the peptidoglycan substrate for the sorting reaction. Responsible for the display of important virulence factors. Important for interactions with the host and host colonization during infection. The protein is Sortase A of Staphylococcus aureus (strain NCTC 8325 / PS 47).